Reading from the N-terminus, the 478-residue chain is MQVLHVCSEMFPLLKTGGLADVLGALPAAQIAEGIDTRVLLPAFPDIRRGIPDAQVVSRRDTFAGRITLLFGHYNGVGIYLIDAPHLYDRPGSPYHDTNLFAYTDNVLRFALLGWVGAEMATGLDPFWRPDIVHAHDWHAGLAPAYLAARGHPAKSVFTVHNLAYQGMYYAHHMNEIDLPWSFYNMHGLEFNGQISFLKAGLYYADHITAVSPTYAREITEPEFGYGMEGLLRQRQREGRLTGILNGVDEKIWNPETDLLLASRFSRDSVEDKAENKRQLQVAMGLKVNDKVPLFAVVSRLTSQKGLDLVLEALPGLLEQGGQLALLGAGDPVLQEGFLAAAAEHPGQVGVQIGYHEAFSHRLMGGSDVILVPSRFEPCGLTQLYGLKYGTLPLVRRTGGLADTVSDTSLENLADGIATGFAFEDSNAWSLLRAIRRAFVLWSRPSLWRFVQRQAMAMDFSWHVAAQSYRDLYQRLKS.

Lys-15 lines the ADP-alpha-D-glucose pocket.

The protein belongs to the glycosyltransferase 1 family. Bacterial/plant glycogen synthase subfamily.

The enzyme catalyses [(1-&gt;4)-alpha-D-glucosyl](n) + ADP-alpha-D-glucose = [(1-&gt;4)-alpha-D-glucosyl](n+1) + ADP + H(+). Its pathway is glycan biosynthesis; glycogen biosynthesis. Its function is as follows. Synthesizes alpha-1,4-glucan chains using ADP-glucose. In Enterobacter sp. (strain 638), this protein is Glycogen synthase.